A 225-amino-acid chain; its full sequence is Holliday junction branch migration complex subunit RuvA (225 aa).

The segment at 1-68 is domain I; it reads MIGWLQGQKV…DDGSSLFGFP (68 aa). A domain II region spans residues 69–147; sequence ERRERDMFRT…EFSCRDPGMS (79 aa). Residues 148 to 158 are flexible linker; that stretch reads LVDNGVIDSHQ. Positions 159-225 are domain III; that stretch reads LKDSSLHELQ…SLRWLSQEAA (67 aa).

The protein belongs to the RuvA family. In terms of assembly, homotetramer. Forms an RuvA(8)-RuvB(12)-Holliday junction (HJ) complex. HJ DNA is sandwiched between 2 RuvA tetramers; dsDNA enters through RuvA and exits via RuvB. An RuvB hexamer assembles on each DNA strand where it exits the tetramer. Each RuvB hexamer is contacted by two RuvA subunits (via domain III) on 2 adjacent RuvB subunits; this complex drives branch migration. In the full resolvosome a probable DNA-RuvA(4)-RuvB(12)-RuvC(2) complex forms which resolves the HJ.

The protein resides in the cytoplasm. The RuvA-RuvB-RuvC complex processes Holliday junction (HJ) DNA during genetic recombination and DNA repair, while the RuvA-RuvB complex plays an important role in the rescue of blocked DNA replication forks via replication fork reversal (RFR). RuvA specifically binds to HJ cruciform DNA, conferring on it an open structure. The RuvB hexamer acts as an ATP-dependent pump, pulling dsDNA into and through the RuvAB complex. HJ branch migration allows RuvC to scan DNA until it finds its consensus sequence, where it cleaves and resolves the cruciform DNA. This Prochlorococcus marinus (strain MIT 9313) protein is Holliday junction branch migration complex subunit RuvA.